The chain runs to 264 residues: MMKKLFHSTLIVLLFFSFFGVQPIHAKKQFKVPNSVASISKENTYPNASQDQPMLQPSKLAKELLDHSEVKIENPHLIKMLNESNISGTPLAVGYRATIFLGKWALGYESNETVANWEYKKINTNRADNRGGKETAEMHYAQEQQYRVKGGLTAKVPNAEDVKSMMMQKAMKKTNLPLAFETVIGAGTKRDQIYKVAPKKIGYLHAYAPAVNEKGKVTYGEVYLVLKGNKRKLVVKNVTSQGIGAWIPVQDHVTFGFQLSSLPR.

The N-terminal stretch at 1–26 (MMKKLFHSTLIVLLFFSFFGVQPIHA) is a signal peptide.

This is an uncharacterized protein from Bacillus subtilis (strain 168).